Reading from the N-terminus, the 283-residue chain is Probable endonuclease 4 (283 aa).

Residues His69, His109, Glu145, Asp179, His182, His216, Asp229, His231, and Glu261 each coordinate Zn(2+).

The protein belongs to the AP endonuclease 2 family. Requires Zn(2+) as cofactor.

It carries out the reaction Endonucleolytic cleavage to 5'-phosphooligonucleotide end-products.. In terms of biological role, endonuclease IV plays a role in DNA repair. It cleaves phosphodiester bonds at apurinic or apyrimidinic (AP) sites, generating a 3'-hydroxyl group and a 5'-terminal sugar phosphate. The chain is Probable endonuclease 4 from Prosthecochloris aestuarii (strain DSM 271 / SK 413).